The following is a 522-amino-acid chain: Cytochrome P450 1A1 (522 aa).

Phenylalanine 229 lines the substrate pocket. Position 463 (cysteine 463) interacts with heme.

It belongs to the cytochrome P450 family. The cofactor is heme. In terms of tissue distribution, liver.

It localises to the endoplasmic reticulum membrane. It is found in the microsome membrane. It catalyses the reaction an organic molecule + reduced [NADPH--hemoprotein reductase] + O2 = an alcohol + oxidized [NADPH--hemoprotein reductase] + H2O + H(+). Its function is as follows. Cytochromes P450 are a group of heme-thiolate monooxygenases. They oxidize a variety of structurally unrelated compounds, including steroids, fatty acids, and xenobiotics. In Oncorhynchus mykiss (Rainbow trout), this protein is Cytochrome P450 1A1 (cyp1a1).